A 325-amino-acid chain; its full sequence is E3 ubiquitin-protein ligase SIAH2 (325 aa).

Residues 1–15 show a composition bias toward polar residues; sequence MSRPSSTGPSANKPC. Residues 1 to 43 are disordered; the sequence is MSRPSSTGPSANKPCSKQPPPPQTPHAPSPAAPPAAATISAAG. Position 6 is a phosphoserine (serine 6). Serine 16 is modified (phosphoserine; by DYRK2). The span at 17-33 shows a compositional bias: pro residues; that stretch reads KQPPPPQTPHAPSPAAP. Position 24 is a phosphothreonine; by MAPK14 (threonine 24). Phosphoserine; by DYRK2 and MAPK14 is present on serine 29. Residues 34–43 show a composition bias toward low complexity; the sequence is PAAATISAAG. A Phosphoserine; by DYRK2 modification is found at serine 69. The RING-type zinc-finger motif lies at 81–116; it reads CPVCFDYVLPPILQCQAGHLVCNQCRQKLSCCPTCR. The residue at position 120 (threonine 120) is a Phosphothreonine; by DYRK2. The segment at 131 to 323 is SBD; the sequence is VASAVLFPCK…LGINVTISTC (193 aa). The segment at 134 to 194 adopts an SIAH-type zinc-finger fold; the sequence is AVLFPCKYAT…VMSHLMHAHK (61 aa). Zn(2+) contacts are provided by cysteine 139, cysteine 146, histidine 158, cysteine 162, cysteine 169, cysteine 176, histidine 188, and histidine 193.

It belongs to the SINA (Seven in absentia) family. As to quaternary structure, homodimer. Interacts with VAV1, without mediating its ubiquitin-mediated degradation. Probable component of some large E3 complex possibly composed of UBE2D1, SIAH2, CACYBP/SIP, SKP1, APC and TBL1X. Interacts with UBE2I. Interacts with UBE2E2. Interacts with PEG10, which may inhibit its activity. Interacts with PEG3 and EGLN2. Interacts with DYRK2. Interacts with SNCAIP. Interacts with NR1D1 and NR1D2. Interacts with DCC. Interacts with AXIN1. In terms of processing, phosphorylated at Thr-24 and Ser-29 by MAPK14, which mediates the degradation by the proteasome of EGLN3. Phosphorylated at Ser-29 by DYRK2; this increases the ubiquitin ligase activity and promotes degradation of EGLN3. Detected in brain (at protein level).

It is found in the cytoplasm. The protein resides in the nucleus. It catalyses the reaction S-ubiquitinyl-[E2 ubiquitin-conjugating enzyme]-L-cysteine + [acceptor protein]-L-lysine = [E2 ubiquitin-conjugating enzyme]-L-cysteine + N(6)-ubiquitinyl-[acceptor protein]-L-lysine.. It participates in protein modification; protein ubiquitination. Functionally, E3 ubiquitin-protein ligase that mediates ubiquitination and subsequent proteasomal degradation of target proteins. E3 ubiquitin ligases accept ubiquitin from an E2 ubiquitin-conjugating enzyme in the form of a thioester and then directly transfers the ubiquitin to targeted substrates. Mediates E3 ubiquitin ligase activity either through direct binding to substrates or by functioning as the essential RING domain subunit of larger E3 complexes. Mediates ubiquitination and proteasomal degradation of DYRK2 in response to hypoxia. Promotes monoubiquitination of SNCA. Triggers the ubiquitin-mediated degradation of many substrates, including proteins involved in transcription regulation (GPS2, POU2AF1, PML, NCOR1), a cell surface receptor (DCC), an antiapoptotic protein (BAG1), and a protein involved in synaptic vesicle function in neurons (SYP). It is thereby involved in apoptosis, tumor suppression, cell cycle, transcription and signaling processes. Has some overlapping function with SIAH1. Triggers the ubiquitin-mediated degradation of TRAF2, whereas SIAH1 does not. Regulates cellular clock function via ubiquitination of circadian transcriptional repressors NR1D1 and NR1D2 leading to their proteasomal degradation. Plays an important role in mediating the rhythmic degradation/clearance of NR1D1 and NR1D2 contributing to their circadian profile of protein abundance. Mediates ubiquitination and degradation of EGLN2 and EGLN3 in response to the unfolded protein response (UPR), leading to their degradation and subsequent stabilization of ATF4. Also part of the Wnt signaling pathway in which it mediates the Wnt-induced ubiquitin-mediated proteasomal degradation of AXIN1. The chain is E3 ubiquitin-protein ligase SIAH2 (Siah2) from Rattus norvegicus (Rat).